We begin with the raw amino-acid sequence, 251 residues long: Large ribosomal subunit protein uL4 (251 aa).

This sequence belongs to the universal ribosomal protein uL4 family. Part of the 50S ribosomal subunit.

In terms of biological role, one of the primary rRNA binding proteins, this protein initially binds near the 5'-end of the 23S rRNA. It is important during the early stages of 50S assembly. It makes multiple contacts with different domains of the 23S rRNA in the assembled 50S subunit and ribosome. Forms part of the polypeptide exit tunnel. The chain is Large ribosomal subunit protein uL4 from Methanothrix thermoacetophila (strain DSM 6194 / JCM 14653 / NBRC 101360 / PT) (Methanosaeta thermophila).